The primary structure comprises 874 residues: Tyrosine-protein kinase receptor TYRO3 (874 aa).

The N-terminal stretch at 1 to 20 (MEVSLCILLFLLHFNEGIHG) is a signal peptide. Ig-like C2-type domains lie at 21–106 (VRFT…IISS) and 117–198 (PHFG…GTVH). Residues 21–411 (VRFTQKPFHQ…QAQTQRGHMW (391 aa)) lie on the Extracellular side of the membrane. An intrachain disulfide couples Cys42 to Cys95. N-linked (GlcNAc...) asparagine glycans are attached at residues Asn135, Asn174, Asn217, Asn270, Asn305, and Asn373. Residues Cys138 and Cys181 are joined by a disulfide bond. 2 consecutive Fibronectin type-III domains span residues 202 to 297 (RPDS…TPQA) and 299 to 403 (PSAA…AMQA). The chain crosses the membrane as a helical span at residues 412-432 (VGLLFGLLVATMVGLLLIVLI). At 433-874 (RNRGKETQFG…EEEEDVIINV (442 aa)) the chain is on the cytoplasmic side. Residues 497 to 768 (LTLGRMLGKG…QHLIDQLELL (272 aa)) form the Protein kinase domain. ATP is bound by residues 503–511 (LGKGEFGSV) and Lys529. Asp634 (proton acceptor) is an active-site residue. Phosphotyrosine; by autocatalysis is present on Tyr665.

It belongs to the protein kinase superfamily. Tyr protein kinase family. AXL/UFO subfamily.

The protein resides in the cell membrane. The catalysed reaction is L-tyrosyl-[protein] + ATP = O-phospho-L-tyrosyl-[protein] + ADP + H(+). In terms of biological role, may be involved in cell adhesion processes, particularly in the central nervous system. This Danio rerio (Zebrafish) protein is Tyrosine-protein kinase receptor TYRO3 (tyro3).